The sequence spans 575 residues: E3 ubiquitin-protein ligase IpaH1.4 (575 aa).

The tract at residues 1–270 (MIKSTNIQAI…PDYSGPQIFF (270 aa)) is interaction with target proteins. LRR repeat units follow at residues 69-90 (LQNQ…PDLP), 91-115 (PQIT…MLKV), 117-130 (HAQF…PALP), 131-150 (ETLE…PFLP), 151-170 (ENLT…PLLP), 171-195 (PELK…KLEG), 197-209 (ALAN…LPEL), and 210-233 (PFSM…VLRL). Positions 271–281 (SMGNSATISAP) are linker. Residues 282–575 (EHSLADAVTA…LSENGSNHIA (294 aa)) form an E3 ubiquitin-protein ligase catalytic domain region. One can recognise an NEL domain in the interval 284–575 (SLADAVTAWF…LSENGSNHIA (292 aa)). Cys368 serves as the catalytic Glycyl thioester intermediate.

Belongs to the LRR-containing bacterial E3 ligase family. In terms of assembly, interacts with human RBCK1/HOIL-1 and RNF31/HOIP components of the LUBAC complex. Ubiquitinated in the presence of host E1 ubiquitin-activating enzyme, E2 ubiquitin-conjugating enzyme and ubiquitin.

The protein localises to the secreted. It is found in the host cytoplasm. The enzyme catalyses S-ubiquitinyl-[E2 ubiquitin-conjugating enzyme]-L-cysteine + [acceptor protein]-L-lysine = [E2 ubiquitin-conjugating enzyme]-L-cysteine + N(6)-ubiquitinyl-[acceptor protein]-L-lysine.. It functions in the pathway protein modification; protein ubiquitination. Its activity is regulated as follows. Exists in an autoinhibited state in the absence of substrate protein, probably due to interactions of the leucine-rich repeat domain with the catalytic domain. Is activated upon binding to a substrate protein. E3 ubiquitin-protein ligase effector that inhibits host cell innate immunity during bacterial infection by catalyzing 'Lys-48'-linked polyubiquitination and subsequent degradation of host RNF31/HOIP and RBCK1/HOIL-1. Host RNF31/HOIP is the catalytic component of the LUBAC complex, which conjugates linear ('Met-1'-linked) polyubiquitin chains at the surface of bacteria invading the host cytosol to form the ubiquitin coat surrounding bacteria. The bacterial ubiquitin coat acts as an 'eat-me' signal for xenophagy and promotes NF-kappa-B activation. By promoting degradation of host RNF31/HOIP, IpaH1.4 prevents formation of the bacterial ubiquitin coat and activation of host cell innate immunity. This is E3 ubiquitin-protein ligase IpaH1.4 from Shigella flexneri.